Reading from the N-terminus, the 346-residue chain is Cyclic GMP-AMP synthase-like protein (346 aa).

ATP is bound by residues Ser58 and 70-72; that span reads EFD. Mg(2+) is bound by residues Glu70, Asp72, and Asp165. GTP contacts are provided by residues Asp165 and 212 to 219; that span reads MVCAPHWE. ATP contacts are provided by residues 216–219, Lys237, and 252–256; these read PHWE and SYMLK.

It belongs to the mab-21 family. Requires Mg(2+) as cofactor. Mn(2+) is required as a cofactor.

With respect to regulation, activated in response of some unknown stimulus. Not activated in response to L-monocytogenes infection. Probable nucleotidyltransferase that catalyzes the formation of cyclic dinucleotide second messenger in response to some unknown stimulus. Does not catalyze the formation of cyclic GMP-AMP from ATP and GTP. The protein is Cyclic GMP-AMP synthase-like protein of Drosophila melanogaster (Fruit fly).